Here is a 1194-residue protein sequence, read N- to C-terminus: Probable disease resistance protein RPP1 (1194 aa).

The interval 1-27 is disordered; it reads MGSVMSLGCSKRKATNQDVDSESRKRR. The 165-residue stretch at 96 to 260 folds into the TIR domain; sequence WKHDVFPSFH…KISTDVSNML (165 aa). 105 to 110 contacts NAD(+); it reads HGADVR. The active site involves Glu-171. In terms of domain architecture, NB-ARC spans 280 to 535; sequence DMLEQLLRLD…ACLFNGESTT (256 aa). 14 LRR repeats span residues 623–647, 658–681, 690–713, 714–737, 739–760, 761–784, 786–807, 808–831, 832–855, 866–878, 879–899, 900–922, 943–965, and 966–991; these read LSNT…HFVR, QLAL…GYES, PEFL…TKQL, RNLK…STAT, LEEL…IEKL, TSLQ…ENAT, LREL…IGTA, TNLK…IGDI, TDLE…IGNL, CSKL…NINL, KSLD…PEIS, THIS…IMSW, FDII…VKRM, and SRLR…SLDY. The disordered stretch occupies residues 1170–1194; it reads RRSSSPDLSPESSRVSSYDHCLRGD. Residues 1171-1185 show a composition bias toward low complexity; it reads RSSSPDLSPESSRVS.

Belongs to the disease resistance TIR-NB-LRR family.

The catalysed reaction is NAD(+) + H2O = ADP-D-ribose + nicotinamide + H(+). TIR-NB-LRR receptor-like protein that confers resistance to the pathogen Hyaloperonospora arabidopsis. Probably acts as a NAD(+) hydrolase (NADase): in response to activation, catalyzes cleavage of NAD(+) into ADP-D-ribose (ADPR) and nicotinamide; NAD(+) cleavage triggering a defense system that promotes cell death. This Arabidopsis thaliana (Mouse-ear cress) protein is Probable disease resistance protein RPP1.